Here is a 95-residue protein sequence, read N- to C-terminus: DNA-directed RNA polymerase subunit Rpo11 (95 aa).

It belongs to the archaeal Rpo11/eukaryotic RPB11/RPC19 RNA polymerase subunit family. Part of the RNA polymerase complex.

Its subcellular location is the cytoplasm. It carries out the reaction RNA(n) + a ribonucleoside 5'-triphosphate = RNA(n+1) + diphosphate. DNA-dependent RNA polymerase (RNAP) catalyzes the transcription of DNA into RNA using the four ribonucleoside triphosphates as substrates. The sequence is that of DNA-directed RNA polymerase subunit Rpo11 from Thermococcus onnurineus (strain NA1).